Here is a 943-residue protein sequence, read N- to C-terminus: Glycine dehydrogenase (decarboxylating) (943 aa).

N6-(pyridoxal phosphate)lysine is present on lysine 695.

This sequence belongs to the GcvP family. As to quaternary structure, the glycine cleavage system is composed of four proteins: P, T, L and H. Pyridoxal 5'-phosphate is required as a cofactor.

It carries out the reaction N(6)-[(R)-lipoyl]-L-lysyl-[glycine-cleavage complex H protein] + glycine + H(+) = N(6)-[(R)-S(8)-aminomethyldihydrolipoyl]-L-lysyl-[glycine-cleavage complex H protein] + CO2. Functionally, the glycine cleavage system catalyzes the degradation of glycine. The P protein binds the alpha-amino group of glycine through its pyridoxal phosphate cofactor; CO(2) is released and the remaining methylamine moiety is then transferred to the lipoamide cofactor of the H protein. The sequence is that of Glycine dehydrogenase (decarboxylating) from Jannaschia sp. (strain CCS1).